A 240-amino-acid polypeptide reads, in one-letter code: Ubiquinone biosynthesis O-methyltransferase (240 aa).

S-adenosyl-L-methionine is bound by residues arginine 44, glycine 64, aspartate 85, and methionine 129.

The protein belongs to the methyltransferase superfamily. UbiG/COQ3 family.

The catalysed reaction is a 3-demethylubiquinol + S-adenosyl-L-methionine = a ubiquinol + S-adenosyl-L-homocysteine + H(+). It catalyses the reaction a 3-(all-trans-polyprenyl)benzene-1,2-diol + S-adenosyl-L-methionine = a 2-methoxy-6-(all-trans-polyprenyl)phenol + S-adenosyl-L-homocysteine + H(+). It functions in the pathway cofactor biosynthesis; ubiquinone biosynthesis. Its function is as follows. O-methyltransferase that catalyzes the 2 O-methylation steps in the ubiquinone biosynthetic pathway. This chain is Ubiquinone biosynthesis O-methyltransferase, found in Escherichia coli O127:H6 (strain E2348/69 / EPEC).